Consider the following 331-residue polypeptide: Ketol-acid reductoisomerase (NADP(+)) (331 aa).

Positions 1–182 constitute a KARI N-terminal Rossmann domain; it reads MATLYYDTDA…GGTRAGILET (182 aa). Residues 25 to 28, Ser-51, Ser-53, and 83 to 86 contribute to the NADP(+) site; these read YGSQ and DEFQ. The active site involves His-108. Gly-134 is an NADP(+) binding site. Residues 183–328 enclose the KARI C-terminal knotted domain; the sequence is NFKEETETDL…KGLRAMFSWL (146 aa). 4 residues coordinate Mg(2+): Asp-191, Glu-195, Glu-227, and Glu-231. Ser-252 lines the substrate pocket.

The protein belongs to the ketol-acid reductoisomerase family. The cofactor is Mg(2+).

The catalysed reaction is (2R)-2,3-dihydroxy-3-methylbutanoate + NADP(+) = (2S)-2-acetolactate + NADPH + H(+). It carries out the reaction (2R,3R)-2,3-dihydroxy-3-methylpentanoate + NADP(+) = (S)-2-ethyl-2-hydroxy-3-oxobutanoate + NADPH + H(+). The protein operates within amino-acid biosynthesis; L-isoleucine biosynthesis; L-isoleucine from 2-oxobutanoate: step 2/4. Its pathway is amino-acid biosynthesis; L-valine biosynthesis; L-valine from pyruvate: step 2/4. Its function is as follows. Involved in the biosynthesis of branched-chain amino acids (BCAA). Catalyzes an alkyl-migration followed by a ketol-acid reduction of (S)-2-acetolactate (S2AL) to yield (R)-2,3-dihydroxy-isovalerate. In the isomerase reaction, S2AL is rearranged via a Mg-dependent methyl migration to produce 3-hydroxy-3-methyl-2-ketobutyrate (HMKB). In the reductase reaction, this 2-ketoacid undergoes a metal-dependent reduction by NADPH to yield (R)-2,3-dihydroxy-isovalerate. This Synechococcus sp. (strain RCC307) protein is Ketol-acid reductoisomerase (NADP(+)).